Here is a 326-residue protein sequence, read N- to C-terminus: WD repeat-containing protein slr1409 (326 aa).

6 WD repeats span residues 47–77 (GSDV…TLWT), 88–118 (GQKP…RLWN), 129–159 (PHRA…KIFT), 169–199 (LKSG…HLIN), 210–240 (TGQG…KLWN), and 252–282 (VPTG…RFWQ).

This Synechocystis sp. (strain ATCC 27184 / PCC 6803 / Kazusa) protein is WD repeat-containing protein slr1409.